A 137-amino-acid chain; its full sequence is Large ribosomal subunit protein uL16 (137 aa).

Belongs to the universal ribosomal protein uL16 family. Part of the 50S ribosomal subunit.

Its function is as follows. Binds 23S rRNA and is also seen to make contacts with the A and possibly P site tRNAs. The chain is Large ribosomal subunit protein uL16 from Rhodopseudomonas palustris (strain HaA2).